The following is a 98-amino-acid chain: La1-like protein 13 (98 aa).

The first 24 residues, 1 to 24 (MERILKPVFLAILIVLSFSSQCMG), serve as a signal peptide directing secretion. Residue Lys-97 is modified to Lysine amide.

It belongs to the scorpion La1-like peptide family. Contains 4 disulfide bonds. As to expression, expressed by the venom gland.

It localises to the secreted. This is La1-like protein 13 from Urodacus yaschenkoi (Inland robust scorpion).